A 205-amino-acid polypeptide reads, in one-letter code: Holliday junction branch migration complex subunit RuvA (205 aa).

Positions 1–64 (MIGKLKGVID…EDQIKLFGFR (64 aa)) are domain I. Residues 65-143 (SDIEREWFRL…AFANVDPAVV (79 aa)) form a domain II region. Residues 144–154 (HLAGAVDDDRA) are flexible linker. The segment at 154-205 (APRPVKDAISALVNLGYGQPQAAAAIASVARDAGEGAETAQLIRLGLKELAK) is domain III.

It belongs to the RuvA family. Homotetramer. Forms an RuvA(8)-RuvB(12)-Holliday junction (HJ) complex. HJ DNA is sandwiched between 2 RuvA tetramers; dsDNA enters through RuvA and exits via RuvB. An RuvB hexamer assembles on each DNA strand where it exits the tetramer. Each RuvB hexamer is contacted by two RuvA subunits (via domain III) on 2 adjacent RuvB subunits; this complex drives branch migration. In the full resolvosome a probable DNA-RuvA(4)-RuvB(12)-RuvC(2) complex forms which resolves the HJ.

It is found in the cytoplasm. Functionally, the RuvA-RuvB-RuvC complex processes Holliday junction (HJ) DNA during genetic recombination and DNA repair, while the RuvA-RuvB complex plays an important role in the rescue of blocked DNA replication forks via replication fork reversal (RFR). RuvA specifically binds to HJ cruciform DNA, conferring on it an open structure. The RuvB hexamer acts as an ATP-dependent pump, pulling dsDNA into and through the RuvAB complex. HJ branch migration allows RuvC to scan DNA until it finds its consensus sequence, where it cleaves and resolves the cruciform DNA. The protein is Holliday junction branch migration complex subunit RuvA of Afipia carboxidovorans (strain ATCC 49405 / DSM 1227 / KCTC 32145 / OM5) (Oligotropha carboxidovorans).